A 181-amino-acid chain; its full sequence is Copper-resistant cuproprotein CopI (181 aa).

Positions 1–24 are cleaved as a signal peptide; that stretch reads MFPRRLLPASLIVLGVLFGASAQA. Cu(2+) contacts are provided by H79, C163, H168, and M173.

The protein belongs to the CopI family.

It is found in the periplasm. Its function is as follows. Involved in copper tolerance. The polypeptide is Copper-resistant cuproprotein CopI (Pseudomonas aeruginosa (strain ATCC 15692 / DSM 22644 / CIP 104116 / JCM 14847 / LMG 12228 / 1C / PRS 101 / PAO1)).